We begin with the raw amino-acid sequence, 159 residues long: Transcriptional repressor NrdR (159 aa).

A zinc finger lies at 3 to 34 (CPTCQNTDSRVLESRSADTGKSVRRRRECLNC). The ATP-cone domain occupies 49 to 139 (ISVIKKDGSR…VYRKFNGVKD (91 aa)).

It belongs to the NrdR family. Requires Zn(2+) as cofactor.

Functionally, negatively regulates transcription of bacterial ribonucleotide reductase nrd genes and operons by binding to NrdR-boxes. In Prochlorococcus marinus subsp. pastoris (strain CCMP1986 / NIES-2087 / MED4), this protein is Transcriptional repressor NrdR.